Reading from the N-terminus, the 161-residue chain is Putative acetyltransferase SAR0816 (161 aa).

The protein belongs to the transferase hexapeptide repeat family.

In Staphylococcus aureus (strain MRSA252), this protein is Putative acetyltransferase SAR0816.